The primary structure comprises 341 residues: MEPAFGEVNQLGGVFVNGRPLPNAIRLRIVELAQLGIRPCDISRQLRVSHGCVSKILARYNETGSILPGAIGGSKPRVTTPTVVKHIRTYKQRDPGIFAWEIRDRLLADGVCDKYNVPSVSSISRILRNKIGNLAQQGHYDSYKQHQPAPQPALPYNHIYSYPSPITAAAAKVPTPPGVPAIPGSVAMPRTWPSSHSVTDILGIRSITDQVNDSSPYHSPKVEEWSSLGRNNFPAAAPHAVNGLEKGALEQEAKYGQAPNGLPAVSSFVSASSMAPYPTPAQVSPYMTYSAAPSGYVAGHGWQHAGGTPLSPHNCDIPASLAFKGMQAAREGSHSVTASAL.

The segment at residues 4 to 130 (AFGEVNQLGG…SSISRILRNK (127 aa)) is a DNA-binding region (paired). The PAI subdomain stretch occupies residues 7–63 (EVNQLGGVFVNGRPLPNAIRLRIVELAQLGIRPCDISRQLRVSHGCVSKILARYNET). The tract at residues 82–130 (TVVKHIRTYKQRDPGIFAWEIRDRLLADGVCDKYNVPSVSSISRILRNK) is RED subdomain. The segment at 168–189 (AAAAKVPTPPGVPAIPGSVAMP) is interaction with KDM5B.

In terms of assembly, interacts with KDM5B.

It is found in the nucleus. In terms of biological role, transcription factor required for normal development of thymus, parathyroid glands, ultimobranchial bodies, teeth, skeletal elements of skull and larynx as well as distal limbs. This Propithecus coquereli (Coquerel's sifaka) protein is Paired box protein Pax-9 (PAX9).